The primary structure comprises 251 residues: Imidazole glycerol phosphate synthase subunit HisF (251 aa).

Residues Asp11 and Asp130 contribute to the active site.

This sequence belongs to the HisA/HisF family. Heterodimer of HisH and HisF.

It is found in the cytoplasm. The enzyme catalyses 5-[(5-phospho-1-deoxy-D-ribulos-1-ylimino)methylamino]-1-(5-phospho-beta-D-ribosyl)imidazole-4-carboxamide + L-glutamine = D-erythro-1-(imidazol-4-yl)glycerol 3-phosphate + 5-amino-1-(5-phospho-beta-D-ribosyl)imidazole-4-carboxamide + L-glutamate + H(+). It participates in amino-acid biosynthesis; L-histidine biosynthesis; L-histidine from 5-phospho-alpha-D-ribose 1-diphosphate: step 5/9. Its function is as follows. IGPS catalyzes the conversion of PRFAR and glutamine to IGP, AICAR and glutamate. The HisF subunit catalyzes the cyclization activity that produces IGP and AICAR from PRFAR using the ammonia provided by the HisH subunit. The protein is Imidazole glycerol phosphate synthase subunit HisF of Bacteroides thetaiotaomicron (strain ATCC 29148 / DSM 2079 / JCM 5827 / CCUG 10774 / NCTC 10582 / VPI-5482 / E50).